Reading from the N-terminus, the 219-residue chain is Proteasome subunit beta 2 (219 aa).

Residues 1–25 (MAEWIAGGLEGPAGRGLDERVVRSG) constitute a propeptide, removed in mature form; by autocatalysis. The active-site Nucleophile is the Thr26.

It belongs to the peptidase T1B family. The 20S proteasome core is composed of 14 alpha and 14 beta subunits that assemble into four stacked heptameric rings, resulting in a barrel-shaped structure. The two inner rings, each composed of seven catalytic beta subunits, are sandwiched by two outer rings, each composed of seven alpha subunits. The catalytic chamber with the active sites is on the inside of the barrel. Has a gated structure, the ends of the cylinder being occluded by the N-termini of the alpha-subunits. Is capped at one or both ends by the proteasome regulatory ATPase, PAN.

Its subcellular location is the cytoplasm. It catalyses the reaction Cleavage of peptide bonds with very broad specificity.. With respect to regulation, the formation of the proteasomal ATPase PAN-20S proteasome complex, via the docking of the C-termini of PAN into the intersubunit pockets in the alpha-rings, triggers opening of the gate for substrate entry. Interconversion between the open-gate and close-gate conformations leads to a dynamic regulation of the 20S proteasome proteolysis activity. Functionally, component of the proteasome core, a large protease complex with broad specificity involved in protein degradation. This chain is Proteasome subunit beta 2, found in Aeropyrum pernix (strain ATCC 700893 / DSM 11879 / JCM 9820 / NBRC 100138 / K1).